The following is a 352-amino-acid chain: MQTYGNPDVTYGWWVGNSVVTNRAGRFIGSHVGHTGIICFATGASCLWELSRFDSSVPMGHQSSIYLSHLASLGIGFDEAGVWTGAGVATIAIFHLIFSMVYGGAGLAHSLFFDPDLNEGPIGRVDKFKLEWDNPNNLTFILGHHLIFLGVANIWFVEWARVHGIYDPALGEVRTIFPGYGDFGMVWGHQFDFIKIDSLEDVMSGHAFLAFLQISGGAFHIATRQIGEYTKFKGDGLLSAEAVLSWSLAGLFLMGVVAAFWAASNTTVYPTEWYGEPLEFKFGISPYWADTGDTSDCKYFFGHTSRAALVNVQYYFAFFCLQGHLWHALRALGFDFRRIAKAIGGLTESTSS.

The next 6 membrane-spanning stretches (helical) occupy residues phenylalanine 27–leucine 47, valine 88–alanine 108, phenylalanine 140–alanine 160, valine 202–alanine 222, alanine 242–alanine 262, and leucine 309–leucine 329.

It belongs to the PsbB/PsbC family. IsiA/Pcb subfamily. In terms of assembly, the antenna complex consists of divinyl chlorophylls (a and b) and divinyl chlorophyll a/b binding proteins and binds more divinyl chlorophyll b than does the antenna complex from high-light-adapted Prochlorococcus. Divinyl chlorophyll a serves as cofactor. Requires divinyl chlorophyll b as cofactor.

The protein localises to the cellular thylakoid membrane. Its function is as follows. The antenna complex functions as a light receptor, it captures and delivers excitation energy to photosystems II and I. The Prochlorales pcb genes are not related to higher plant LHCs. This Prochlorococcus marinus (strain SARG / CCMP1375 / SS120) protein is Divinyl chlorophyll a/b light-harvesting protein PcbH (pcbH).